The following is a 345-amino-acid chain: Tyrosine--tRNA ligase (345 aa).

Tyr36 is an L-tyrosine binding site. The 'HIGH' region motif lies at 41–49 (PTGEMHIGH). L-tyrosine-binding residues include Tyr163, Gln167, Asp170, and Gln185.

Belongs to the class-I aminoacyl-tRNA synthetase family. TyrS type 3 subfamily. As to quaternary structure, homodimer.

Its subcellular location is the cytoplasm. It catalyses the reaction tRNA(Tyr) + L-tyrosine + ATP = L-tyrosyl-tRNA(Tyr) + AMP + diphosphate + H(+). Catalyzes the attachment of tyrosine to tRNA(Tyr) in a two-step reaction: tyrosine is first activated by ATP to form Tyr-AMP and then transferred to the acceptor end of tRNA(Tyr). This Natronomonas pharaonis (strain ATCC 35678 / DSM 2160 / CIP 103997 / JCM 8858 / NBRC 14720 / NCIMB 2260 / Gabara) (Halobacterium pharaonis) protein is Tyrosine--tRNA ligase.